Here is a 344-residue protein sequence, read N- to C-terminus: Cell division protein ZipA (344 aa).

Residues 1 to 6 are Periplasmic-facing; that stretch reads MEDLQL. The helical transmembrane segment at 7–27 threads the bilayer; sequence VLFVLGAIAIVAVLVHGFWSI. Over 28–344 the chain is Cytoplasmic; that stretch reads RRQQPKSLKD…DYLHRIRANA (317 aa). Disordered stretches follow at residues 75–94 and 108–139; these read VRKA…PYLK and QFKQ…ASRQ.

This sequence belongs to the ZipA family. In terms of assembly, interacts with FtsZ via their C-terminal domains.

It localises to the cell inner membrane. In terms of biological role, essential cell division protein that stabilizes the FtsZ protofilaments by cross-linking them and that serves as a cytoplasmic membrane anchor for the Z ring. Also required for the recruitment to the septal ring of downstream cell division proteins. This chain is Cell division protein ZipA, found in Shewanella oneidensis (strain ATCC 700550 / JCM 31522 / CIP 106686 / LMG 19005 / NCIMB 14063 / MR-1).